The following is a 73-amino-acid chain: Conotoxin CnIIIG (73 aa).

An N-terminal signal peptide occupies residues M1–A19. Residues L20 to D48 constitute a propeptide that is removed on maturation. Pyrrolidone carboxylic acid is present on Q51. Cystine bridges form between C53/C72, C54/C70, and C60/C73.

Belongs to the conotoxin M superfamily. In terms of tissue distribution, expressed by the venom duct.

It localises to the secreted. Functionally, shows a paralytic effect in fish. This chain is Conotoxin CnIIIG, found in Conus consors (Singed cone).